We begin with the raw amino-acid sequence, 475 residues long: Mitochondrial adenyl nucleotide antiporter SLC25A24 (475 aa).

The tract at residues 1–173 (MLRWLRGFVL…RFWKHSTGID (173 aa)) is regulatory N-terminal domain. Residues 1–197 (MLRWLRGFVL…ERKSGQWWRQ (197 aa)) lie on the Mitochondrial intermembrane side of the membrane. EF-hand domains lie at 19–54 (EPPT…LGIP), 55–88 (LGQD…KDHE), 86–121 (DHEK…LGLT), and 122–157 (ISEQ…NPVA). Positions 32, 34, 36, 38, 43, 68, 70, 72, 74, 79, 99, 101, 103, 105, 110, 135, 137, 139, 141, and 146 each coordinate Ca(2+). The tract at residues 159–168 (IEEIIRFWKH) is linker region. Residues 174–475 (IGDSLTIPDE…MKQTLGVTQK (302 aa)) are C-terminal transmembrane transporter domain. Solcar repeat units follow at residues 192–276 (GQWW…YKKL), 284–369 (IGTF…LKSH), and 381–469 (PGVL…MKQT). Residues 198–215 (LLAGGIAGAVSRTSTAPL) form a helical membrane-spanning segment. At 216–250 (DRLKVMMQVHGSKSMNIFGGFRQMIKEGGVRSLWR) the chain is on the mitochondrial matrix side. Residues 251–270 (GNGTNVIKIAPETAVKFWVY) form a helical membrane-spanning segment. Residues 271-293 (EQYKKLLTEEGQKIGTFERFISG) are Mitochondrial intermembrane-facing. The helical transmembrane segment at 294 to 307 (SMAGATAQTFIYPM) threads the bilayer. Residues 308–343 (EVMKTRLAVGKTGQYSGIYDCAKKILKYEGFGAFYK) lie on the Mitochondrial matrix side of the membrane. Position 318 is an N6-acetyllysine; alternate (Lys318). Residue Lys318 is modified to N6-succinyllysine; alternate. Lys334 bears the N6-acetyllysine mark. The helical transmembrane segment at 344–363 (GYVPNLLGIIPYAGIDLAVY) threads the bilayer. Residues 364–386 (ELLKSHWLDNFAKDSVNPGVLVL) are Mitochondrial intermembrane-facing. Residues 387–404 (LGCGALSSTCGQLASYPL) traverse the membrane as a helical segment. Topologically, residues 405 to 443 (ALVRTRMQAQAMLEGAPQLNMVGLFRRIISKEGLPGLYR) are mitochondrial matrix. N6-acetyllysine; alternate is present on Lys435. The residue at position 435 (Lys435) is an N6-succinyllysine; alternate. Residues 444–463 (GITPNFMKVLPAVGISYVVY) traverse the membrane as a helical segment. Residues 464 to 475 (ENMKQTLGVTQK) are Mitochondrial intermembrane-facing.

Belongs to the mitochondrial carrier (TC 2.A.29) family. As to quaternary structure, monomer. Mainly expressed in colon. Also expressed in the small intestine proximal to the ileum. Weakly expressed in kidney but not in the liver.

The protein resides in the mitochondrion inner membrane. Its subcellular location is the peroxisome membrane. The enzyme catalyses Mg(2+)(out) + phosphate(in) + ATP(out) = Mg(2+)(in) + phosphate(out) + ATP(in). It catalyses the reaction ADP(out) + phosphate(in) + H(+)(out) = ADP(in) + phosphate(out) + H(+)(in). It carries out the reaction AMP(out) + phosphate(in) = AMP(in) + phosphate(out). The catalysed reaction is phosphate(in) + ATP(out) + 2 H(+)(out) = phosphate(out) + ATP(in) + 2 H(+)(in). The enzyme catalyses dADP(in) + ADP(out) = dADP(out) + ADP(in). It catalyses the reaction Mg(2+)(in) + ADP(out) + ATP(in) + H(+)(out) = Mg(2+)(out) + ADP(in) + ATP(out) + H(+)(in). It carries out the reaction ADP(out) + diphosphate(in) = ADP(in) + diphosphate(out). The catalysed reaction is dAMP(in) + ADP(out) + H(+)(out) = dAMP(out) + ADP(in) + H(+)(in). The enzyme catalyses 3'-AMP(in) + ADP(out) + H(+)(out) = 3'-AMP(out) + ADP(in) + H(+)(in). It catalyses the reaction dAMP(out) + phosphate(in) = dAMP(in) + phosphate(out). It carries out the reaction 3'-AMP(out) + phosphate(in) = 3'-AMP(in) + phosphate(out). The catalysed reaction is dADP(out) + phosphate(in) + H(+)(out) = dADP(in) + phosphate(out) + H(+)(in). Its activity is regulated as follows. Activated by an increase in cytosolic calcium levels that induce a conformational change of the N-terminal regulatory domain, uncapping the channel and allowing transport. Inhibited by bathophenanthroline, mersalyl, p-hydroxymercuribenzoate, bromcresol purple and tannic acid. Electroneutral antiporter that mediates the transport of adenyl nucleotides through the inner mitochondrial membrane. Originally identified as an ATP-magnesium/inorganic phosphate antiporter, it also acts as a broad specificity adenyl nucleotide antiporter. By regulating the mitochondrial matrix adenyl nucleotide pool could adapt to changing cellular energetic demands and indirectly regulate adenyl nucleotide-dependent metabolic pathways. In vitro, a low activity is also observed with guanyl and pyrimidine nucleotides. May play a role in protecting cells against oxidative stress-induced cell death, by buffering calcium levels in the mitochondrial matrix through the formation of calcium-phosphate precipitates. The sequence is that of Mitochondrial adenyl nucleotide antiporter SLC25A24 (SLC25A24) from Oryctolagus cuniculus (Rabbit).